A 565-amino-acid polypeptide reads, in one-letter code: Berberine bridge enzyme-like C-2 (565 aa).

The signal sequence occupies residues 1–17; the sequence is MFPIIILISFSFTFLFA. N-linked (GlcNAc...) asparagine glycosylation is found at N28 and N40. A disulfide bridge links C32 with C94. One can recognise an FAD-binding PCMH-type domain in the interval 72 to 248; it reads YMPKPTVIIL…YAWKIRLLKV (177 aa). Position 109 is a pros-8alpha-FAD histidine (H109). N363 and N502 each carry an N-linked (GlcNAc...) asparagine glycan.

The protein belongs to the oxygen-dependent FAD-linked oxidoreductase family. FAD serves as cofactor.

The protein resides in the vacuole. It participates in alkaloid biosynthesis; nicotine biosynthesis. In terms of biological role, involved in the biosynthesis of pyridine alkaloid natural products, leading mainly to the production of anabasine, anatabine, nicotine and nornicotine, effective deterrents against herbivores with antiparasitic and pesticide properties (neurotoxins); nornicotine serves as the precursor in the synthesis of the carcinogen compound N'-nitrosonornicotine (NNN). Catalyzes a late oxidation step subsequent to the pyridine ring condensation reaction in the biosynthesis of alkaloids. The chain is Berberine bridge enzyme-like C-2 from Nicotiana tabacum (Common tobacco).